A 224-amino-acid polypeptide reads, in one-letter code: MMKGSPPTVEEERALCAVGYRAIAGIDEAGRGCWAGPVVAAAVILPERVIAKPELLDGVADSKMLTPAQRVALFERITSLAVAWAVGSVPAHVIDSHGILPATRLAMQVALLRLPLPADVLLIDAVRLDGWPLPQRVLVKGDVRCLSIAAASIIAKVMRDRFMEGLGRYWTRYGFAAHKGYGTAAHQEALRRYGPTPHHRLTFRPLCDMAPANIRNAALEGEQP.

The 203-residue stretch at 21 to 223 folds into the RNase H type-2 domain; that stretch reads RAIAGIDEAG…IRNAALEGEQ (203 aa). A divalent metal cation is bound by residues Asp27, Glu28, and Asp124.

It belongs to the RNase HII family. It depends on Mn(2+) as a cofactor. The cofactor is Mg(2+).

It is found in the cytoplasm. The enzyme catalyses Endonucleolytic cleavage to 5'-phosphomonoester.. Endonuclease that specifically degrades the RNA of RNA-DNA hybrids. In Roseiflexus castenholzii (strain DSM 13941 / HLO8), this protein is Ribonuclease HII.